The primary structure comprises 469 residues: Properdin (469 aa).

An N-terminal signal peptide occupies residues 1–27 (MITEGAQAPRLLLPPLLLLLTLPATGS). TSP type-1 domains follow at residues 28–76 (DPVL…QPCR), 77–134 (SPRW…QCCP), 136–191 (MGGW…QSCP), 193–255 (HGAW…PPCP), 257–313 (AGSW…VPCP), 315–377 (DGEW…QHCP), and 379–462 (KGSW…PACK). 3 cysteine pairs are disulfide-bonded: Cys32–Cys56, Cys43–Cys72, and Cys57–Cys75. Trp83 and Trp86 each carry a C-linked (Man) tryptophan glycan. 7 cysteine pairs are disulfide-bonded: Cys89–Cys127, Cys93–Cys133, Cys104–Cys111, Cys132–Cys170, Cys148–Cys184, Cys152–Cys190, and Cys163–Cys174. Trp139, Trp142, and Trp145 each carry a C-linked (Man) tryptophan glycan. The O-linked (Fuc...) threonine glycan is linked to Thr151. C-linked (Man) tryptophan glycans are attached at residues Trp196, Trp199, and Trp202. Cystine bridges form between Cys205/Cys248, Cys209/Cys254, and Cys224/Cys238. O-linked (Fuc...) serine glycosylation is present at Ser208. Residues 218 to 238 (ETRSRKCSAPEPSQKPPGKPC) form a disordered region. 2 C-linked (Man) tryptophan glycosylation sites follow: Trp260 and Trp263. 3 disulfides stabilise this stretch: Cys269-Cys306, Cys273-Cys312, and Cys284-Cys296. O-linked (Fuc...) threonine glycosylation is present at Thr272. 2 C-linked (Man) tryptophan glycosylation sites follow: Trp321 and Trp324. Cystine bridges form between Cys327–Cys370, Cys337–Cys376, and Cys350–Cys360. Residues 351–359 (KGRKFDGHR) form an interaction with Complement C3 beta chain region. C-linked (Man) tryptophan glycosylation is found at Trp382, Trp385, and Trp388. 3 disulfide bridges follow: Cys391/Cys455, Cys395/Cys461, and Cys407/Cys439. Residue Asn428 is glycosylated (N-linked (GlcNAc...) asparagine).

In terms of assembly, in plasma, properdin exists as dimers, trimers or tetramers in the relative proportions of 26:54:20. Interacts with the pro-C3-convertase enzyme complex (C3b-Bb) comprised of Complement C3 beta chain (C3b) and the Complement factor B Bb fragment (Bb), where it binds (via its TSP type-1 5 domain) with C3b and Bb. This interaction stabilizes the complex and allows it to become the active C3-convertase enzyme complex (C3b-Bb-FP). Interacts with C3b. Interacts with CFB.

It is found in the secreted. In terms of biological role, a positive regulator of the alternate pathway of complement. It binds to and stabilizes the C3- and C5-convertase enzyme complexes. Inhibits CFI-CFH mediated degradation of Inhibits CFI-CFH mediated degradation of Complement C3 beta chain (C3b). The chain is Properdin (CFP) from Pongo abelii (Sumatran orangutan).